A 238-amino-acid chain; its full sequence is Putative type I specificity subunit S.MpnORF201P (238 aa).

It belongs to the type-I restriction system S methylase family. As to quaternary structure, the methyltransferase is composed of M and S polypeptides.

Functionally, the specificity (S) subunit of a type I methyltransferase (MTase); this subunit dictates DNA sequence specificity. The single R subunit has multiple frameshifts and is probably not expressed. In Mycoplasma pneumoniae (strain ATCC 29342 / M129 / Subtype 1) (Mycoplasmoides pneumoniae), this protein is Putative type I specificity subunit S.MpnORF201P.